A 274-amino-acid polypeptide reads, in one-letter code: Phosphate import ATP-binding protein PstB (274 aa).

Over residues 1–11 (MSEISIATSVP) the composition is skewed to polar residues. The disordered stretch occupies residues 1–21 (MSEISIATSVPSGPGPLIGNQ). The 242-residue stretch at 28–269 (VIVRDLNFYY…PNDRRTQDYI (242 aa)) folds into the ABC transporter domain. Position 60–67 (60–67 (GPSGCGKS)) interacts with ATP.

It belongs to the ABC transporter superfamily. Phosphate importer (TC 3.A.1.7) family. As to quaternary structure, the complex is composed of two ATP-binding proteins (PstB), two transmembrane proteins (PstC and PstA) and a solute-binding protein (PstS).

It localises to the cell inner membrane. It carries out the reaction phosphate(out) + ATP + H2O = ADP + 2 phosphate(in) + H(+). Part of the ABC transporter complex PstSACB involved in phosphate import. Responsible for energy coupling to the transport system. The polypeptide is Phosphate import ATP-binding protein PstB (Rhodopseudomonas palustris (strain BisB5)).